The chain runs to 806 residues: NADH:(hydroxy)cinnamate reductase subunit CrdB (806 aa).

FMN phosphoryl serine is present on Ser257. FAD contacts are provided by Ala310, Glu329, Asn337, Thr338, Gly342, Gly343, and Asp576. Residue Arg635 is the Proton donor of the active site. Residues His742, Glu771, Ala786, and Leu787 each coordinate FAD.

The protein belongs to the FAD-dependent oxidoreductase 2 family. FRD/SDH subfamily. NADH:(hydroxy)cinnamate reductase Crd is a heterodimer composed of CrdA and CrdB subunits, encoded by adjacent genes. The cofactor is FAD. FMN serves as cofactor. Post-translationally, is flavinylated on Ser-257 by ApbE, encoded in a neighboring gene. Covalent attachment of FMN is essential for catalytic activity.

The catalysed reaction is 3-phenylpropanoate + NAD(+) = (E)-cinnamate + NADH + H(+). The enzyme catalyses 3-(3,4-dihydroxyphenyl)propanoate + NAD(+) = (E)-caffeate + NADH + H(+). It catalyses the reaction phloretate + NAD(+) = (E)-4-coumarate + NADH + H(+). It carries out the reaction dihydroferulate + NAD(+) = (E)-ferulate + NADH + H(+). With respect to regulation, is inactivated by molecular oxygen, allowing regulation of Crd activity by medium oxygen level. In terms of biological role, component of the NADH:(hydroxy)cinnamate reductase Crd that catalyzes the reduction of the double bond in cinnamate, p-coumarate, caffeate, and ferulate under anaerobic conditions with NADH or methyl viologen as the electron donor. Is moderately active against acrylate and practically inactive against urocanate, fumarate, methacrylate and crotonate. CrdB is the catalytic subunit that binds substrates. Is likely involved in protecting V.ruber from (hydroxy)cinnamate poisoning. This chain is NADH:(hydroxy)cinnamate reductase subunit CrdB, found in Vibrio ruber (strain DSM 16370 / JCM 11486 / BCRC 17186 / CECT 7878 / LMG 23124 / VR1).